The sequence spans 420 residues: Zinc finger protein Pegasus (420 aa).

Lys-5 is covalently cross-linked (Glycyl lysine isopeptide (Lys-Gly) (interchain with G-Cter in SUMO2)). 3 consecutive C2H2-type zinc fingers follow at residues Leu-82 to His-104, His-110 to His-132, and Tyr-138 to His-161. Residue Lys-185 forms a Glycyl lysine isopeptide (Lys-Gly) (interchain with G-Cter in SUMO2) linkage. 2 stretches are compositionally biased toward polar residues: residues Gln-223–Thr-236 and Leu-262–Ala-273. Disordered stretches follow at residues Gln-223–Met-247 and Leu-262–Pro-356. The segment covering Gln-290–Thr-311 has biased composition (low complexity). A compositionally biased stretch (polar residues) spans Ser-332–Ser-349. The C2H2-type 4; degenerate zinc-finger motif lies at His-364–His-387. The segment at Phe-393 to His-417 adopts a C2H2-type 5 zinc-finger fold.

Belongs to the Ikaros C2H2-type zinc-finger protein family. As to quaternary structure, self-associates. Interacts with other family members; IKZF1, IKZF2, IKZF3 and IKZF4.

Its subcellular location is the nucleus. In terms of biological role, transcriptional repressor that binds the core 5'GNNTGTNG-3' DNA consensus sequence. Involved in megakaryocyte differentiation. The chain is Zinc finger protein Pegasus (IKZF5) from Pongo abelii (Sumatran orangutan).